Reading from the N-terminus, the 834-residue chain is Periplasmic nitrate reductase (834 aa).

Residues 1–31 constitute a signal peptide (tat-type signal); it reads MTGELTRREMLKAHAAGIAAATAGIALPAAA. The 57-residue stretch at 43 to 99 folds into the 4Fe-4S Mo/W bis-MGD-type domain; sequence ITWSKAPCRFCGTGCGVMVGVKEGQVVATHGDMQAEVNRGLNCIKGYFLSKIMYGTD. Positions 50, 53, 57, and 85 each coordinate [4Fe-4S] cluster. Residues lysine 87, glutamine 154, asparagine 179, cysteine 183, 216–223, 247–251, 266–268, methionine 377, glutamine 381, asparagine 487, 513–514, lysine 536, aspartate 563, and 723–732 each bind Mo-bis(molybdopterin guanine dinucleotide); these read WGSNMAEM, STFTH, GTD, SD, and TGRVLEHWHS. Tryptophan 799 is a binding site for substrate. Asparagine 807 and lysine 824 together coordinate Mo-bis(molybdopterin guanine dinucleotide).

It belongs to the prokaryotic molybdopterin-containing oxidoreductase family. NasA/NapA/NarB subfamily. Component of the periplasmic nitrate reductase NapAB complex composed of NapA and NapB. Requires [4Fe-4S] cluster as cofactor. Mo-bis(molybdopterin guanine dinucleotide) serves as cofactor. Post-translationally, predicted to be exported by the Tat system. The position of the signal peptide cleavage has not been experimentally proven.

It localises to the periplasm. It carries out the reaction 2 Fe(II)-[cytochrome] + nitrate + 2 H(+) = 2 Fe(III)-[cytochrome] + nitrite + H2O. Functionally, catalytic subunit of the periplasmic nitrate reductase complex NapAB. Receives electrons from NapB and catalyzes the reduction of nitrate to nitrite. The polypeptide is Periplasmic nitrate reductase (Rhizobium meliloti (strain 1021) (Ensifer meliloti)).